Reading from the N-terminus, the 388-residue chain is MTDTSFIESEERQALRKAVASWVANYGHEYYLDKARKHEHTSELWAEAGKLGFLGVNLPEEYGGGGAGMYELSLVMEEMAAAGSALLLMVVSPAINGTIIAKFGTDDQKKRWLPGIADGSLTMAFAITEPDAGSNSHKITTTARRDGSDWIIKGQKVFISGIDQAQAVLVVGRSEEAKTGKLRPALFVVPTDAPGFSYTPIEMELVSPERQFQVFLDDVRLPADALVGAEDAAIAQLFAGLNPERIMGAASAVGMGRFALGRAVDYVKTRKVWSTPIGAHQGLAHPLAQCHIEVELAKLMTQKAATLYDHGDDFGAAEAANMAKYAAAEASSRAVDQAVQSMGGNGLTKEYGVAAMMTSARLARIAPISREMVLNFVAQTSLGLPRSY.

Belongs to the acyl-CoA dehydrogenase family. The cofactor is FAD.

It catalyses the reaction a 2,3-saturated acyl-CoA + A = a 2,3-dehydroacyl-CoA + AH2. In Mycobacterium tuberculosis (strain CDC 1551 / Oshkosh), this protein is Acyl-CoA dehydrogenase fadE12 (fadE12).